A 136-amino-acid polypeptide reads, in one-letter code: Gonadotropin subunit beta-2 (136 aa).

An N-terminal signal peptide occupies residues 1–21; that stretch reads MVCLFLGASSFIWSLAPAAAA. Intrachain disulfides connect Cys27/Cys75, Cys41/Cys90, Cys44/Cys128, Cys52/Cys106, Cys56/Cys108, and Cys111/Cys118. Asn31 carries an N-linked (GlcNAc...) asparagine glycan.

Belongs to the glycoprotein hormones subunit beta family. In terms of assembly, heterodimer of an alpha and a beta chain.

Its subcellular location is the secreted. Functionally, involved in gametogenesis and steroidogenesis. This Fundulus heteroclitus (Killifish) protein is Gonadotropin subunit beta-2 (cgbb).